Here is a 1010-residue protein sequence, read N- to C-terminus: Lethal(2) giant larvae protein homolog SRO77 (1010 aa).

14 WD repeats span residues 47–80, 87–122, 127–163, 182–215, 240–275, 299–364, 372–407, 431–504, 518–595, 602–637, 649–700, 709–763, 768–815, and 829–852; these read TVTT…VVFT, IKHM…TTVF, ITCI…KLKI, SIQW…KQHF, VIQS…IHAR, AIFK…QKLF, LINF…ETLI, VTTC…FEVN, KNIS…STVI, VSAI…FNEN, VSTV…DATK, GINS…THAL, IATS…KNLR, and SILE…SVLN. A disordered region spans residues 932-958; sequence SNAARKLPPGTEDHRYARPVRSSGRSN.

This sequence belongs to the WD repeat L(2)GL family. In terms of assembly, interacts with SEC9.

Functionally, acts as an allosteric regulator of polarized exocytosis by promoting the targeted fusion of vesicles with the plasma membrane. Involved in maintenance of ion homeostasis in cells exposed to NaCl stress. May be involved in the targeting of the myosin proteins to their intrinsic pathways. Multicopy suppressor of RHO3. May also participate in the maintenance of cell polarity and bud growth. The sequence is that of Lethal(2) giant larvae protein homolog SRO77 (SRO77) from Saccharomyces cerevisiae (strain ATCC 204508 / S288c) (Baker's yeast).